A 107-amino-acid chain; its full sequence is UPF0145 protein ECA2666 (107 aa).

It belongs to the UPF0145 family.

The protein is UPF0145 protein ECA2666 of Pectobacterium atrosepticum (strain SCRI 1043 / ATCC BAA-672) (Erwinia carotovora subsp. atroseptica).